A 118-amino-acid polypeptide reads, in one-letter code: Phosphoribosyl-AMP cyclohydrolase (118 aa).

A Mg(2+)-binding site is contributed by aspartate 85. Cysteine 86 is a Zn(2+) binding site. Aspartate 87 and aspartate 89 together coordinate Mg(2+). Zn(2+) is bound by residues cysteine 102 and cysteine 109.

The protein belongs to the PRA-CH family. Homodimer. It depends on Mg(2+) as a cofactor. The cofactor is Zn(2+).

The protein resides in the cytoplasm. It catalyses the reaction 1-(5-phospho-beta-D-ribosyl)-5'-AMP + H2O = 1-(5-phospho-beta-D-ribosyl)-5-[(5-phospho-beta-D-ribosylamino)methylideneamino]imidazole-4-carboxamide. The protein operates within amino-acid biosynthesis; L-histidine biosynthesis; L-histidine from 5-phospho-alpha-D-ribose 1-diphosphate: step 3/9. Its function is as follows. Catalyzes the hydrolysis of the adenine ring of phosphoribosyl-AMP. The protein is Phosphoribosyl-AMP cyclohydrolase of Sulfurisphaera tokodaii (strain DSM 16993 / JCM 10545 / NBRC 100140 / 7) (Sulfolobus tokodaii).